Consider the following 367-residue polypeptide: Chorismate synthase (367 aa).

The disordered stretch occupies residues 41 to 60 (FTHDLQRRASGKSRHTSARR). R48 and R54 together coordinate NADP(+). Residues 125–127 (RSS), 238–239 (NA), G278, 293–297 (KPTSS), and R319 contribute to the FMN site.

Belongs to the chorismate synthase family. In terms of assembly, homotetramer. FMNH2 is required as a cofactor.

The catalysed reaction is 5-O-(1-carboxyvinyl)-3-phosphoshikimate = chorismate + phosphate. The protein operates within metabolic intermediate biosynthesis; chorismate biosynthesis; chorismate from D-erythrose 4-phosphate and phosphoenolpyruvate: step 7/7. Catalyzes the anti-1,4-elimination of the C-3 phosphate and the C-6 proR hydrogen from 5-enolpyruvylshikimate-3-phosphate (EPSP) to yield chorismate, which is the branch point compound that serves as the starting substrate for the three terminal pathways of aromatic amino acid biosynthesis. This reaction introduces a second double bond into the aromatic ring system. This chain is Chorismate synthase, found in Xanthomonas euvesicatoria pv. vesicatoria (strain 85-10) (Xanthomonas campestris pv. vesicatoria).